A 657-amino-acid chain; its full sequence is MTETPRDNSATRARWQTCLKLARELLLVGPDDKDLKLSYLHTLIDTGRLGPTHHPRKKILVIGAGITGLVAGRLLKDAGYDVTIIEANESRVGGRIKTFRATKHHQPFDDAAQYAEAGAMRLPDFHPLVLALVDKLGLGRRQFYNVDVGPSTGSGPEVPVPPVTYTSFTGQTWTNGDDSPDFREPDKRGNSWIRANRVQVRRADYTASPERINEGFHLTGDEVRAPVVKMVDDALESVRDYYSDVVDGKRVNKPFDEWVEGWARVIRDFDGYSMGGFLRDHAGLSDEAIEAVGTLENTSSRLHLSFFHSFLSRSDINPTVRYWEIPGGSWRLPHALHEGLRDEVRLGHRMIRLEYHDPSRDADPEGTAVGPDGWGVTVETVAENDPQAPPRRWTADLAIVTIPFSALRFVEIVPSMSYKKRRAIVETHYDSATKVLLEFSHRWWEFTEDDWREELERIAPGVYEYYRLGPEAAGEPARMPTLAEADAGLLGAAVKDSGVTEEMRQIGSTMPLRGPALRPATHSFGGGSATDNPNRFMYYPSHRVEGSTGGVVLASYSWSDDAARWDSMRSAERYVYALRNLQALHGRRIEVFFTGRGATKSWARDPYAFGEAAIYTAHQMTSFHLDASRPEGPVHFAGEHTSLKHAWIEGALEVHTA.

Residues 1-12 (MTETPRDNSATR) form the signal peptide. FAD is bound by residues Glu-86, Ala-87, Arg-95, Met-120, Arg-121, Met-350, Glu-639, Trp-647, and Ile-648.

This sequence belongs to the flavin monoamine oxidase family. LGOX subfamily. The mature enzyme is a heterohexamer composed of 2 alpha chains, 2 beta chains and 2 gamma chains (alpha2beta2gamma2). It depends on FAD as a cofactor. The precursor form is proteolytically cleaved by an endopeptidase into alpha, beta and gamma chains, which form the stable mature enzyme.

The protein resides in the secreted. The enzyme catalyses L-glutamate + O2 + H2O = H2O2 + 2-oxoglutarate + NH4(+). Proteinase K-treated enzyme exhibits improved affinity for the substrate, increased activity and increased thermostability. Its function is as follows. Catalyzes the oxidative deamination of L-glutamate to 2-ketoglutarate along with the production of ammonia and hydrogen peroxide. Exhibits strict specificity for L-glutamate, and shows only very weak activity with L-glutamine. This Streptomyces diastatochromogenes protein is L-glutamate oxidase precursor.